A 469-amino-acid chain; its full sequence is Ribosomal protein uS12 methylthiotransferase RimO (469 aa).

An MTTase N-terminal domain is found at 3 to 119 (TRVYMHTLGC…VARIVSDAQA (117 aa)). The [4Fe-4S] cluster site is built by Cys-12, Cys-48, Cys-82, Cys-154, Cys-158, and Cys-161. A Radical SAM core domain is found at 140-370 (SLPSHTAYLK…MAVQQAISRA (231 aa)). A TRAM domain is found at 373–441 (QAMIGRRVEV…EYDLVGRVVA (69 aa)). The segment at 444 to 469 (PSRAARPLPAAPRAAPARKGGLNVLR) is disordered. Positions 447 to 461 (AARPLPAAPRAAPAR) are enriched in low complexity.

It belongs to the methylthiotransferase family. RimO subfamily. [4Fe-4S] cluster serves as cofactor.

It localises to the cytoplasm. The catalysed reaction is L-aspartate(89)-[ribosomal protein uS12]-hydrogen + (sulfur carrier)-SH + AH2 + 2 S-adenosyl-L-methionine = 3-methylsulfanyl-L-aspartate(89)-[ribosomal protein uS12]-hydrogen + (sulfur carrier)-H + 5'-deoxyadenosine + L-methionine + A + S-adenosyl-L-homocysteine + 2 H(+). In terms of biological role, catalyzes the methylthiolation of an aspartic acid residue of ribosomal protein uS12. The sequence is that of Ribosomal protein uS12 methylthiotransferase RimO from Anaeromyxobacter sp. (strain K).